The following is an 816-amino-acid chain: Phosphatidylinositol 4-kinase beta (816 aa).

Disordered stretches follow at residues 1–30 (MGDT…GSLL), 101–120 (EDEM…RRRR), and 248–318 (AHRK…SFSS). An N-acetylglycine modification is found at Gly-2. The segment at 2 to 68 (GDTVVEPAPL…VKLLHGGMAV (67 aa)) is interaction with ACBD3. Residues 52 to 242 (CQDVLEKVKL…GTKLRKLILS (191 aa)) enclose the PIK helical domain. Ser-258 is modified (phosphoserine). Thr-263 bears the Phosphothreonine mark. Residues Ser-266, Ser-275, Ser-277, Ser-284, and Ser-294 each carry the phosphoserine modification. Composition is skewed to polar residues over residues 278 to 297 (DATA…SNPK) and 306 to 318 (SSST…SFSS). Ser-428 is subject to Phosphoserine. Thr-438 bears the Phosphothreonine mark. Position 511 is a phosphoserine (Ser-511). Thr-517 and Thr-519 each carry phosphothreonine. The PI3K/PI4K catalytic domain maps to 535-801 (EPWQEKVRRI…MVDGSMRSIT (267 aa)). The interval 541-547 (VRRIREG) is G-loop. The catalytic loop stretch occupies residues 668–676 (QVKDRHNGN). The activation loop stretch occupies residues 687–711 (HIDFGFILSSSPRNLGFETSAFKLT).

The protein belongs to the PI3/PI4-kinase family. Type III PI4K subfamily. As to quaternary structure, interacts with ARF1 and ARF3 in the Golgi complex, but not with ARF4, ARF5 or ARF6. Interacts with NCS1/FREQ in a calcium-independent manner. Interacts with CALN1/CABP8 and CALN2/CABP7; in a calcium-dependent manner; this interaction competes with NCS1/FREQ binding. Interacts with ACBD3. Interacts with ARMH3, YWHAB, YWHAE, YWHAG, YWHAH, YWHAQ, YWHAZ and SFN. Interacts with GGA2 (via VHS domain); the interaction is important for PI4KB location at the Golgi apparatus membrane. Interacts with ATG9A. The cofactor is Mg(2+). Mn(2+) is required as a cofactor.

It is found in the endomembrane system. The protein localises to the mitochondrion outer membrane. The protein resides in the rough endoplasmic reticulum membrane. Its subcellular location is the golgi apparatus. It localises to the golgi apparatus membrane. The enzyme catalyses a 1,2-diacyl-sn-glycero-3-phospho-(1D-myo-inositol) + ATP = a 1,2-diacyl-sn-glycero-3-phospho-(1D-myo-inositol 4-phosphate) + ADP + H(+). Inhibited by wortmannin. Increased kinase activity upon interaction with NCS1/FREQ. Functionally, phosphorylates phosphatidylinositol (PI) in the first committed step in the production of the second messenger inositol-1,4,5,-trisphosphate (PIP). May regulate Golgi disintegration/reorganization during mitosis, possibly via its phosphorylation. Involved in Golgi-to-plasma membrane trafficking. The protein is Phosphatidylinositol 4-kinase beta (PI4KB) of Plecturocebus moloch (Dusky titi monkey).